The chain runs to 525 residues: Coronin-2A (525 aa).

WD repeat units lie at residues 24–71 (NCYD…TGKL), 72–122 (DPHY…RNLT), 123–170 (AYRK…SVIT), 171–214 (SPMS…AGTV), 215–259 (LQEA…DNLS), 260–305 (VPLM…ADKP), and 306–342 (HLSYLTEYRSYNPQKGIGVMPKRGLDVSSCEIFRFYK). A coiled-coil region spans residues 485–524 (QMFYRQQEEIRRLRELLTQREVQAKQLELEIKNLRMGSEQ).

The protein belongs to the WD repeat coronin family. In terms of assembly, binds actin. Component of the N-Cor repressor complex, at least composed of NCOR1, NCOR2, HDAC3, TBL1X, TBL1R, CORO2A and GPS2.

The protein is Coronin-2A (CORO2A) of Homo sapiens (Human).